The following is a 1432-amino-acid chain: ABC transporter B family member 3 (1432 aa).

Disordered stretches follow at residues 1–21 (MDDG…EEEI) and 48–149 (ITQP…KTEE). Low complexity-rich tracts occupy residues 52 to 62 (SNNNNNSNNNN), 76 to 106 (NNNN…FNNN), and 118 to 135 (NTNE…NNND). A coiled-coil region spans residues 117 to 163 (ENTNENNNKNNNNNNNNNDDYNDGADERVKTEEEIKKEAENELNQSV). Residues 180–479 (MFLGTIAAVI…ASPCLALFAQ (300 aa)) form the ABC transmembrane type-1 1 domain. The next 6 membrane-spanning stretches (helical) occupy residues 185–205 (IAAV…GLVV), 232–252 (LLML…LWMI), 303–323 (KVGR…IGFT), 325–345 (GWQL…GGFF), 410–430 (GLGL…AFWY), and 457–477 (FFAV…LALF). The 237-residue stretch at 514–750 (IEFKDVGFHY…QGLYFDLVEK (237 aa)) folds into the ABC transporter 1 domain. Residue 549 to 556 (GDSGGGKS) coordinates ATP. The tract at residues 787–819 (KRSLRKNESESNKKDKEDSNNKKKKKSNKKKVE) is disordered. Residues 791 to 807 (RKNESESNKKDKEDSNN) are compositionally biased toward basic and acidic residues. One can recognise an ABC transmembrane type-1 2 domain in the interval 837–1157 (WCFGFLSAVG…ASSFAPDLAK (321 aa)). 6 consecutive transmembrane segments (helical) span residues 838 to 858 (CFGF…AMVF), 882 to 902 (LMFV…GFLF), 968 to 988 (MVGG…VIIA), 989 to 1009 (CFPL…GFSS), 1060 to 1080 (ISGF…CLSF), and 1134 to 1154 (VFFA…FAPD). One can recognise an ABC transporter 2 domain in the interval 1192-1428 (IEFKNLHFSY…EGPYSQLWYN (237 aa)). 1227–1234 (GDSGGGKS) is a binding site for ATP.

The protein belongs to the ABC transporter superfamily. ABCB family. Multidrug resistance exporter (TC 3.A.1.201) subfamily.

Its subcellular location is the membrane. The protein is ABC transporter B family member 3 (abcB3) of Dictyostelium discoideum (Social amoeba).